The primary structure comprises 128 residues: Large ribosomal subunit protein bL17 (128 aa).

It belongs to the bacterial ribosomal protein bL17 family. Part of the 50S ribosomal subunit. Contacts protein L32.

This is Large ribosomal subunit protein bL17 from Hydrogenovibrio crunogenus (strain DSM 25203 / XCL-2) (Thiomicrospira crunogena).